Reading from the N-terminus, the 644-residue chain is Threonine--tRNA ligase (644 aa).

Positions 1–61 (MNVSIEGQML…DGTTTIEPVY (61 aa)) constitute a TGS domain. Positions 241 to 532 (DHRKLGQQLD…LIEQYAGAFP (292 aa)) are catalytic. Residues cysteine 333, histidine 384, and histidine 509 each contribute to the Zn(2+) site.

It belongs to the class-II aminoacyl-tRNA synthetase family. As to quaternary structure, homodimer. The cofactor is Zn(2+).

The protein resides in the cytoplasm. It carries out the reaction tRNA(Thr) + L-threonine + ATP = L-threonyl-tRNA(Thr) + AMP + diphosphate + H(+). Catalyzes the attachment of threonine to tRNA(Thr) in a two-step reaction: L-threonine is first activated by ATP to form Thr-AMP and then transferred to the acceptor end of tRNA(Thr). Also edits incorrectly charged L-seryl-tRNA(Thr). This is Threonine--tRNA ligase from Nitratidesulfovibrio vulgaris (strain ATCC 29579 / DSM 644 / CCUG 34227 / NCIMB 8303 / VKM B-1760 / Hildenborough) (Desulfovibrio vulgaris).